Reading from the N-terminus, the 125-residue chain is Ribosome maturation factor RimP (125 aa).

It belongs to the RimP family.

It is found in the cytoplasm. Required for maturation of 30S ribosomal subunits. In Rickettsia canadensis (strain McKiel), this protein is Ribosome maturation factor RimP.